The following is a 604-amino-acid chain: UvrABC system protein C (604 aa).

The 78-residue stretch at 15-92 folds into the GIY-YIG domain; it reads DLPGCYLMKN…IQKHQPYFNI (78 aa). In terms of domain architecture, UVR spans 197-232; sequence ETVKKQLTKRMDQAAADLEFERAAELRDQLNYIEMT.

It belongs to the UvrC family. As to quaternary structure, interacts with UvrB in an incision complex.

It is found in the cytoplasm. Functionally, the UvrABC repair system catalyzes the recognition and processing of DNA lesions. UvrC both incises the 5' and 3' sides of the lesion. The N-terminal half is responsible for the 3' incision and the C-terminal half is responsible for the 5' incision. This is UvrABC system protein C from Lactiplantibacillus plantarum (strain ATCC BAA-793 / NCIMB 8826 / WCFS1) (Lactobacillus plantarum).